A 963-amino-acid polypeptide reads, in one-letter code: Adhesion G protein-coupled receptor D2 (963 aa).

Over 1 to 662 (MDAPWGAGER…EEESLLRTLS (662 aa)) the chain is Extracellular. A disordered region spans residues 18–38 (DRSGVSLGPPPTPQVNQGTLG). Residues 116–325 (TTAVLVFDER…LPTVWVRLLC (210 aa)) form the Pentraxin (PTX) domain. An intrachain disulfide couples Cys146 to Cys212. Residue Asn271 is glycosylated (N-linked (GlcNAc...) asparagine). The GAIN-B domain maps to 489–649 (MALVASVQRL…AILLQIYEVQ (161 aa)). The segment at 599-649 (PLFPPHPPSPYTGGAWATTGCSVAALYLDSTACFCNHSTSFAILLQIYEVQ) is GPS. Cys619 and Cys633 are oxidised to a cystine. N-linked (GlcNAc...) asparagine glycosylation occurs at Asn634. A helical transmembrane segment spans residues 663–683 (FVGCGVSFCALTTTFLLFLVA). The Cytoplasmic portion of the chain corresponds to 684–691 (GVPKSERT). Residues 692–712 (TVHKNLTFSLASAEGFLMTSE) traverse the membrane as a helical segment. Topologically, residues 713–720 (WAKANEVA) are extracellular. Residues 721-741 (CVAVTVAMHFLFLVAFSWMLV) form a helical membrane-spanning segment. Over 742 to 762 (EGLLLWRKVVAVSMHPGPGMR) the chain is Cytoplasmic. Residues 763–783 (LYHATGWGVPVGIVAVTLAML) form a helical membrane-spanning segment. The Extracellular portion of the chain corresponds to 784–800 (PHDYVAPGHCWLNVHTN). A helical membrane pass occupies residues 801 to 821 (AIWAFVGPVLFVLTANTCILA). Residues 822-857 (RVVMITVSSARRRARMLSPQPCLQQQIWTQIWATVK) lie on the Cytoplasmic side of the membrane. A helical membrane pass occupies residues 858–878 (PVLVLLPVLGLTWLAGILVHL). At 879–880 (SP) the chain is on the extracellular side. The chain crosses the membrane as a helical span at residues 881 to 901 (AWAYAAVGLNSIQGLYIFLVY). Residues 902–963 (AACNEEVRSA…TPRHPLKAPA (62 aa)) lie on the Cytoplasmic side of the membrane.

Belongs to the G-protein coupled receptor 2 family. Adhesion G-protein coupled receptor (ADGR) subfamily.

It is found in the membrane. Its function is as follows. Orphan receptor. This is Adhesion G protein-coupled receptor D2 (ADGRD2) from Homo sapiens (Human).